The primary structure comprises 418 residues: MQIMVLGGGVIGVTTAYYLAEAGHEVTVLDRQKGPALETSFANAGEISPGYASPWAGPGIPLKAIKWLLMKHGPLVVRPAFDPHMWTWLVKMLRNCTTERYAINKSRMVPLAEYSRDTLKALREATGITYDERTQGTLQLFRTQKQLDGTGGDVEVLKKYGVSYEILDQDGCIAAEPALGGVREKFVGGLRLPHDETGDCKMFTEKLAELCVARGVKFEYDTTIWRVLRSRNRVANLSTSKGFKASEAYVMALGSYSAGFMRRMKRSIPVYPVKGYSITVPIKDADVAPVSTVMDETYKVAITRLGDRIRVGGTAEISGFDLRLHESRRRTLEHSVGDLFPGAGAMREATFWCGLRPMTPDGPPLIGRTELSNLFLNTGHGTLGWTMACGSAKVLADIMSNKVPEIDARALAQERYLK.

3–17 provides a ligand contact to FAD; it reads IMVLGGGVIGVTTAY.

This sequence belongs to the DadA oxidoreductase family. FAD is required as a cofactor.

The catalysed reaction is a D-alpha-amino acid + A + H2O = a 2-oxocarboxylate + AH2 + NH4(+). The protein operates within amino-acid degradation; D-alanine degradation; NH(3) and pyruvate from D-alanine: step 1/1. Its function is as follows. Oxidative deamination of D-amino acids. This chain is D-amino acid dehydrogenase 1 (dadA1), found in Mesorhizobium japonicum (strain LMG 29417 / CECT 9101 / MAFF 303099) (Mesorhizobium loti (strain MAFF 303099)).